Consider the following 330-residue polypeptide: MHLLGPWLLLLEYLAFSDSSKWAFEHPETLYAWEGACVWIPCTYRALDGALESFILFHNPEYNKNTSKFDGTRLYESTKDGEVPSEQKRVQFLGDKSKNCTLSIHPVHVNDSGQLGLRMESKTEKWMERIHLNVSERPFPPHIQLPPEIQESQEVTLTCLLNFSCYGYPIQLQWFLEGVPVGQAAVNSTSLATKSVFTRSELKFSPQWSHHGKIVTCQLHGADGKFLSNDTVQLNVKHTPKLKIEVNPSDAIVREGDSVTMTCEVSSSNPKYTTVSWLKDGTPLKKQNALMLTLQEVTKDQSGKYCCQVSNDVGPGRSEEVFLQVQYAPE.

The N-terminal stretch at 1–17 is a signal peptide; it reads MHLLGPWLLLLEYLAFS. Residues 18–136 enclose the Ig-like V-type domain; that stretch reads DSSKWAFEHP…MERIHLNVSE (119 aa). The Extracellular segment spans residues 18–330; the sequence is DSSKWAFEHP…VFLQVQYAPE (313 aa). 3 disulfide bridges follow: cysteine 37/cysteine 165, cysteine 42/cysteine 100, and cysteine 159/cysteine 217. N-linked (GlcNAc...) asparagine glycans are attached at residues asparagine 65, asparagine 99, and asparagine 110. N-acetylneuraminate is bound at residue arginine 118. Residues asparagine 133, asparagine 162, asparagine 187, and asparagine 229 are each glycosylated (N-linked (GlcNAc...) asparagine). 2 consecutive Ig-like C2-type domains span residues 141 to 233 and 240 to 324; these read PHIQ…DTVQ and PKLK…VFLQ. Cysteine 263 and cysteine 307 are disulfide-bonded.

Belongs to the immunoglobulin superfamily. SIGLEC (sialic acid binding Ig-like lectin) family. Predominantly monomer of isoform CD22-beta. Also found as heterodimer of isoform CD22-beta and a shorter isoform. Interacts with PTPN6/SHP-1, LYN, SYK, PIK3R1/PIK3R2 and PLCG1 upon phosphorylation. Interacts with GRB2, INPP5D and SHC1 upon phosphorylation. May form a complex with INPP5D/SHIP, GRB2 and SHC1.

Its subcellular location is the cell membrane. Its function is as follows. Most highly expressed siglec (sialic acid-binding immunoglobulin-like lectin) on B-cells that plays a role in various aspects of B-cell biology including differentiation, antigen presentation, and trafficking to bone marrow. Binds to alpha 2,6-linked sialic acid residues of surface molecules such as CD22 itself, CD45 and IgM in a cis configuration. Can also bind to ligands on other cells as an adhesion molecule in a trans configuration. Acts as an inhibitory coreceptor on the surface of B-cells and inhibits B-cell receptor induced signaling, characterized by inhibition of the calcium mobilization and cellular activation. Mechanistically, the immunoreceptor tyrosine-based inhibitory motif domain is phosphorylated by the Src kinase LYN, which in turn leads to the recruitment of the protein tyrosine phosphatase 1/PTPN6, leading to the negative regulation of BCR signaling. If this negative signaling from is of sufficient strength, apoptosis of the B-cell can be induced. The sequence is that of B-cell receptor CD22 from Pongo pygmaeus (Bornean orangutan).